A 635-amino-acid chain; its full sequence is Very-long-chain aldehyde decarbonylase GL1-6 (635 aa).

4 consecutive transmembrane segments (helical) span residues 46–66, 100–120, 127–147, and 183–203; these read LLNF…QLWI, IILT…AQVA, GMVV…YWLH, and VVYF…GTVS. The 135-residue stretch at 139–273 folds into the Fatty acid hydroxylase domain; sequence VEFLYYWLHR…MPVYDYIYGT (135 aa).

The protein belongs to the sterol desaturase family. As to quaternary structure, homodimer.

Its subcellular location is the endoplasmic reticulum membrane. It catalyses the reaction a long-chain fatty aldehyde + 2 NADPH + O2 + H(+) = a long-chain alkane + formate + 2 NADP(+) + H2O. Aldehyde decarbonylase involved in the conversion of aldehydes to alkanes. Core component of a very-long-chain alkane synthesis complex. This chain is Very-long-chain aldehyde decarbonylase GL1-6, found in Oryza sativa subsp. indica (Rice).